Consider the following 329-residue polypeptide: Sex comb on midleg-like protein 1 (329 aa).

A phosphoserine mark is found at Ser-138 and Ser-238. Residues 138–157 are disordered; that stretch reads SPTLPVSRRENNSPSNLPRP. An SAM domain is found at 258 to 325; it reads WSVEAVVLFL…YYIDRLKQGK (68 aa).

The protein belongs to the SCM family.

The protein resides in the nucleus. In terms of biological role, putative Polycomb group (PcG) protein. PcG proteins act by forming multiprotein complexes, which are required to maintain the transcriptionally repressive state of homeotic genes throughout development. May be involved in spermatogenesis during sexual maturation. The chain is Sex comb on midleg-like protein 1 (SCML1) from Gorilla gorilla gorilla (Western lowland gorilla).